A 663-amino-acid polypeptide reads, in one-letter code: UvrABC system protein B (663 aa).

Positions 1-10 (MIDKRDDKPF) are enriched in basic and acidic residues. Residues 1–23 (MIDKRDDKPFKLKSKYKPSGDQP) are disordered. In terms of domain architecture, Helicase ATP-binding spans 31–418 (DNIEGGEKAQ…TNTIIEQIIR (388 aa)). ATP is bound at residue 44-51 (GATGTGKT). The Beta-hairpin signature appears at 97–120 (YYDYYQPEAYVPSSDTYIEKDSSV). The region spanning 435–601 (QMDDLLGEIN…TIKKDIRGLI (167 aa)) is the Helicase C-terminal domain. The region spanning 627-662 (KEAINALQKQMQEAAELLDFELAAQMRDLILELKLM) is the UVR domain.

It belongs to the UvrB family. In terms of assembly, forms a heterotetramer with UvrA during the search for lesions. Interacts with UvrC in an incision complex.

Its subcellular location is the cytoplasm. Functionally, the UvrABC repair system catalyzes the recognition and processing of DNA lesions. A damage recognition complex composed of 2 UvrA and 2 UvrB subunits scans DNA for abnormalities. Upon binding of the UvrA(2)B(2) complex to a putative damaged site, the DNA wraps around one UvrB monomer. DNA wrap is dependent on ATP binding by UvrB and probably causes local melting of the DNA helix, facilitating insertion of UvrB beta-hairpin between the DNA strands. Then UvrB probes one DNA strand for the presence of a lesion. If a lesion is found the UvrA subunits dissociate and the UvrB-DNA preincision complex is formed. This complex is subsequently bound by UvrC and the second UvrB is released. If no lesion is found, the DNA wraps around the other UvrB subunit that will check the other stand for damage. The polypeptide is UvrABC system protein B (Streptococcus pyogenes serotype M1).